The sequence spans 408 residues: Succinylornithine transaminase (408 aa).

Residue Lys252 is modified to N6-(pyridoxal phosphate)lysine.

This sequence belongs to the class-III pyridoxal-phosphate-dependent aminotransferase family. AstC subfamily. Pyridoxal 5'-phosphate is required as a cofactor.

The catalysed reaction is N(2)-succinyl-L-ornithine + 2-oxoglutarate = N-succinyl-L-glutamate 5-semialdehyde + L-glutamate. The protein operates within amino-acid degradation; L-arginine degradation via AST pathway; L-glutamate and succinate from L-arginine: step 3/5. In terms of biological role, catalyzes the transamination of N(2)-succinylornithine and alpha-ketoglutarate into N(2)-succinylglutamate semialdehyde and glutamate. Can also act as an acetylornithine aminotransferase. The chain is Succinylornithine transaminase from Salmonella choleraesuis (strain SC-B67).